Here is a 363-residue protein sequence, read N- to C-terminus: Histidinol-phosphate aminotransferase (363 aa).

N6-(pyridoxal phosphate)lysine is present on Lys-218.

Belongs to the class-II pyridoxal-phosphate-dependent aminotransferase family. Histidinol-phosphate aminotransferase subfamily. As to quaternary structure, homodimer. Pyridoxal 5'-phosphate serves as cofactor.

It carries out the reaction L-histidinol phosphate + 2-oxoglutarate = 3-(imidazol-4-yl)-2-oxopropyl phosphate + L-glutamate. It participates in amino-acid biosynthesis; L-histidine biosynthesis; L-histidine from 5-phospho-alpha-D-ribose 1-diphosphate: step 7/9. The sequence is that of Histidinol-phosphate aminotransferase from Xanthomonas axonopodis pv. citri (strain 306).